The sequence spans 913 residues: Protein translocase subunit SecA (913 aa).

ATP is bound by residues Gln87, 105 to 109 (GEGKT), and Asp512. The interval 864-913 (LDQPEEEPAEVEGQPDVAVASVRTEPKIGRNEPCPCGSGKKYKHCHGQVQ) is disordered. The Zn(2+) site is built by Cys897, Cys899, Cys908, and His909. The span at 903–913 (KKYKHCHGQVQ) shows a compositional bias: basic residues.

This sequence belongs to the SecA family. As to quaternary structure, monomer and homodimer. Part of the essential Sec protein translocation apparatus which comprises SecA, SecYEG and auxiliary proteins SecDF-YajC and YidC. The cofactor is Zn(2+).

The protein resides in the cell inner membrane. The protein localises to the cytoplasm. It carries out the reaction ATP + H2O + cellular proteinSide 1 = ADP + phosphate + cellular proteinSide 2.. Its function is as follows. Part of the Sec protein translocase complex. Interacts with the SecYEG preprotein conducting channel. Has a central role in coupling the hydrolysis of ATP to the transfer of proteins into and across the cell membrane, serving both as a receptor for the preprotein-SecB complex and as an ATP-driven molecular motor driving the stepwise translocation of polypeptide chains across the membrane. The polypeptide is Protein translocase subunit SecA (Stutzerimonas stutzeri (strain A1501) (Pseudomonas stutzeri)).